A 359-amino-acid chain; its full sequence is Phosphate acyltransferase (359 aa).

The tract at residues 338-359 is disordered; the sequence is LEGAAGRAARPPPPRRASSHDA.

It belongs to the PlsX family. In terms of assembly, homodimer. Probably interacts with PlsY.

Its subcellular location is the cytoplasm. The enzyme catalyses a fatty acyl-[ACP] + phosphate = an acyl phosphate + holo-[ACP]. It participates in lipid metabolism; phospholipid metabolism. Functionally, catalyzes the reversible formation of acyl-phosphate (acyl-PO(4)) from acyl-[acyl-carrier-protein] (acyl-ACP). This enzyme utilizes acyl-ACP as fatty acyl donor, but not acyl-CoA. This chain is Phosphate acyltransferase, found in Anaeromyxobacter sp. (strain Fw109-5).